We begin with the raw amino-acid sequence, 452 residues long: PHO85 cyclin CLG1 (452 aa).

This sequence belongs to the cyclin family. PCL1,2 subfamily. In terms of assembly, forms a cyclin-CDK complex with PHO85.

Functionally, cyclin partner of the cyclin-dependent kinase (CDK) PHO85. Has a role in cell integrity and polarized cell growth together with the other PCL1/PCL2 cyclin family members. The polypeptide is PHO85 cyclin CLG1 (CLG1) (Saccharomyces cerevisiae (strain ATCC 204508 / S288c) (Baker's yeast)).